We begin with the raw amino-acid sequence, 334 residues long: Anthranilate phosphoribosyltransferase (334 aa).

5-phospho-alpha-D-ribose 1-diphosphate contacts are provided by residues Gly-81, 84 to 85, Thr-89, 91 to 94, 109 to 117, and Ala-121; these read GD, NIST, and KHGSRSVSS. Gly-81 lines the anthranilate pocket. Mg(2+) is bound at residue Ser-93. Arg-167 contacts anthranilate. Mg(2+) is bound by residues Asp-225 and Glu-226.

Belongs to the anthranilate phosphoribosyltransferase family. Homodimer. Mg(2+) is required as a cofactor.

It catalyses the reaction N-(5-phospho-beta-D-ribosyl)anthranilate + diphosphate = 5-phospho-alpha-D-ribose 1-diphosphate + anthranilate. It participates in amino-acid biosynthesis; L-tryptophan biosynthesis; L-tryptophan from chorismate: step 2/5. Functionally, catalyzes the transfer of the phosphoribosyl group of 5-phosphorylribose-1-pyrophosphate (PRPP) to anthranilate to yield N-(5'-phosphoribosyl)-anthranilate (PRA). This is Anthranilate phosphoribosyltransferase from Actinobacillus pleuropneumoniae serotype 5b (strain L20).